Here is a 359-residue protein sequence, read N- to C-terminus: Fructose-bisphosphate aldolase (359 aa).

Position 62 (Ser62) interacts with D-glyceraldehyde 3-phosphate. The active-site Proton donor is the Asp109. Zn(2+) is bound by residues His110, Asp144, Glu174, and His226. Position 227 (Gly227) interacts with dihydroxyacetone phosphate. His265 serves as a coordination point for Zn(2+). Residues 266–268 and 287–290 contribute to the dihydroxyacetone phosphate site; these read GGS and NLDT.

The protein belongs to the class II fructose-bisphosphate aldolase family. As to quaternary structure, homodimer. The cofactor is Zn(2+).

It localises to the cytoplasm. It catalyses the reaction beta-D-fructose 1,6-bisphosphate = D-glyceraldehyde 3-phosphate + dihydroxyacetone phosphate. The protein operates within carbohydrate degradation; glycolysis; D-glyceraldehyde 3-phosphate and glycerone phosphate from D-glucose: step 4/4. Functionally, catalyzes the aldol condensation of dihydroxyacetone phosphate (DHAP or glycerone-phosphate) with glyceraldehyde 3-phosphate (G3P) to form fructose 1,6-bisphosphate (FBP) in gluconeogenesis and the reverse reaction in glycolysis. This Candida albicans (strain SC5314 / ATCC MYA-2876) (Yeast) protein is Fructose-bisphosphate aldolase (FBA1).